The primary structure comprises 548 residues: 5-epi-aristolochene synthase 3 (548 aa).

Asp-301, Asp-305, Asp-444, Thr-448, and Glu-452 together coordinate Mg(2+). The short motif at 301–305 (DDTFD) is the DDXXD motif element.

It belongs to the terpene synthase family. In terms of assembly, monomer. Mg(2+) serves as cofactor. In terms of tissue distribution, expressed in roots, but not in shoots.

It is found in the cytoplasm. The enzyme catalyses (2E,6E)-farnesyl diphosphate = (+)-5-epi-aristolochene + diphosphate. It functions in the pathway secondary metabolite biosynthesis; terpenoid biosynthesis. In terms of biological role, catalyzes the cyclization of trans,trans-farnesyl diphosphate (FPP) to the bicyclic intermediate 5-epi-aristolochene, initial step in the conversion of FPP to the sesquiterpenoid antifungal phytoalexin capsidiol. Produces germacrene A as an enzyme-bound intermediate that is not released by the enzyme, but is further cyclized to produce the bicyclic 5-epi-aristolochene. The protein is 5-epi-aristolochene synthase 3 of Nicotiana attenuata (Coyote tobacco).